A 520-amino-acid chain; its full sequence is GMP synthase [glutamine-hydrolyzing] (520 aa).

One can recognise a Glutamine amidotransferase type-1 domain in the interval Lys-13–Asp-205. The active-site Nucleophile is Cys-90. Residues His-179 and Glu-181 contribute to the active site. The GMPS ATP-PPase domain maps to Trp-206–Arg-395. Ser-233–Ser-239 serves as a coordination point for ATP.

Homodimer.

It catalyses the reaction XMP + L-glutamine + ATP + H2O = GMP + L-glutamate + AMP + diphosphate + 2 H(+). It functions in the pathway purine metabolism; GMP biosynthesis; GMP from XMP (L-Gln route): step 1/1. In terms of biological role, catalyzes the synthesis of GMP from XMP. In Streptococcus pneumoniae serotype 2 (strain D39 / NCTC 7466), this protein is GMP synthase [glutamine-hydrolyzing].